The following is a 228-amino-acid chain: MATWANLGLQDSSSPLMEQLNFFHDHTLLILTMITILVGYIMGMLMFNQFTNRYLLHGQTIEIIWTVLPAIILMFIALPSLRLLYLMDEINTPSITLKSVGHQWYWSYEYSDFLNLEFDSYMIPTNELETNGFRLLDVDNRVVLPVNNQIRILVTATDVLHSWTVPSLGVKVDATPGRLNQLNFLINRPGLFFGQCSEICGANHSFMPIVIESIPMNYFIKWITNMTN.

Topologically, residues 1–26 (MATWANLGLQDSSSPLMEQLNFFHDH) are mitochondrial intermembrane. A helical membrane pass occupies residues 27 to 47 (TLLILTMITILVGYIMGMLMF). Residues 48–60 (NQFTNRYLLHGQT) lie on the Mitochondrial matrix side of the membrane. A helical transmembrane segment spans residues 61–81 (IEIIWTVLPAIILMFIALPSL). At 82–228 (RLLYLMDEIN…FIKWITNMTN (147 aa)) the chain is on the mitochondrial intermembrane side. Positions 161, 196, 198, 200, 204, and 207 each coordinate Cu cation. Residue E198 participates in Mg(2+) binding.

This sequence belongs to the cytochrome c oxidase subunit 2 family. In terms of assembly, component of the cytochrome c oxidase (complex IV, CIV), a multisubunit enzyme composed of a catalytic core of 3 subunits and several supernumerary subunits. The complex exists as a monomer or a dimer and forms supercomplexes (SCs) in the inner mitochondrial membrane with ubiquinol-cytochrome c oxidoreductase (cytochrome b-c1 complex, complex III, CIII). The cofactor is Cu cation.

Its subcellular location is the mitochondrion inner membrane. The enzyme catalyses 4 Fe(II)-[cytochrome c] + O2 + 8 H(+)(in) = 4 Fe(III)-[cytochrome c] + 2 H2O + 4 H(+)(out). Component of the cytochrome c oxidase, the last enzyme in the mitochondrial electron transport chain which drives oxidative phosphorylation. The respiratory chain contains 3 multisubunit complexes succinate dehydrogenase (complex II, CII), ubiquinol-cytochrome c oxidoreductase (cytochrome b-c1 complex, complex III, CIII) and cytochrome c oxidase (complex IV, CIV), that cooperate to transfer electrons derived from NADH and succinate to molecular oxygen, creating an electrochemical gradient over the inner membrane that drives transmembrane transport and the ATP synthase. Cytochrome c oxidase is the component of the respiratory chain that catalyzes the reduction of oxygen to water. Electrons originating from reduced cytochrome c in the intermembrane space (IMS) are transferred via the dinuclear copper A center (CU(A)) of subunit 2 and heme A of subunit 1 to the active site in subunit 1, a binuclear center (BNC) formed by heme A3 and copper B (CU(B)). The BNC reduces molecular oxygen to 2 water molecules using 4 electrons from cytochrome c in the IMS and 4 protons from the mitochondrial matrix. This chain is Cytochrome c oxidase subunit 2 (COXII), found in Anopheles quadrimaculatus (Common malaria mosquito).